Reading from the N-terminus, the 83-residue chain is MRKGSLKEVLAKIKHDPREDERDYYIVIEHRGAYGNEKKIPVEMIELGHGYFFIGETQIPYHRIIRVVKGNGKVVWEKRRRKQ.

The protein belongs to the UPF0248 family.

This chain is UPF0248 protein TGAM_1209, found in Thermococcus gammatolerans (strain DSM 15229 / JCM 11827 / EJ3).